Here is a 155-residue protein sequence, read N- to C-terminus: Large ribosomal subunit protein uL13 (155 aa).

Belongs to the universal ribosomal protein uL13 family. In terms of assembly, part of the 50S ribosomal subunit.

Its function is as follows. This protein is one of the early assembly proteins of the 50S ribosomal subunit, although it is not seen to bind rRNA by itself. It is important during the early stages of 50S assembly. The polypeptide is Large ribosomal subunit protein uL13 (Rickettsia akari (strain Hartford)).